Here is a 277-residue protein sequence, read N- to C-terminus: SPX domain-containing protein 3 (277 aa).

An SPX domain is found at 1 to 152 (MKFGKRLKKQ…GRLLRLPFIE (152 aa)).

The protein is SPX domain-containing protein 3 (SPX3) of Oryza sativa subsp. indica (Rice).